Consider the following 179-residue polypeptide: MAVFKTTLWWLISGTLGIICLSLTATLGILLKNSFTKLSIEPAFTPGPDIELQKDSDCCSCQEKWVGYRCNCYFISSEQKTWNESRHLCASQKSSLLQLQNTDELDFMSSSQQFYWIGLSYSEEHTAWLWENGSALSQYLFPLFETFNPKNCIAYNPNGNALDESCEDKNRYICKQQLI.

Topologically, residues 1–10 (MAVFKTTLWW) are cytoplasmic. The chain crosses the membrane as a helical; Signal-anchor for type II membrane protein span at residues 11-31 (LISGTLGIICLSLTATLGILL). The Extracellular segment spans residues 32–179 (KNSFTKLSIE…NRYICKQQLI (148 aa)). Intrachain disulfides connect C58–C70 and C61–C72. One can recognise a C-type lectin domain in the interval 68 to 175 (YRCNCYFISS…CEDKNRYICK (108 aa)). N-linked (GlcNAc...) asparagine glycans are attached at residues N83 and N132. Cystine bridges form between C89/C174 and C152/C166.

Can form disulfide-bonded heterodimer with NKG2 family members KLRC1 and KLRC2. KLRD1-KLRC1 heterodimer interacts with peptide-bound MHC-E-B2M heterotrimeric complex. KLRD1 plays a prominent role in directly interacting with MHC-E. KLRD1-KLRC1 interacts with much higher affinity with peptide-bound MHC-E-B2M than KLRD1-KLRC2. Interacts with the adapter protein TYROBP/DAP12; this interaction is required for cell surface expression and cell activation. Natural killer cells.

The protein localises to the cell membrane. Its function is as follows. Immune receptor involved in self-nonself discrimination. In complex with KLRC1 or KLRC2 on cytotoxic and regulatory lymphocyte subsets, recognizes non-classical major histocompatibility (MHC) class Ib molecule MHC-E loaded with self-peptides derived from the signal sequence of classical MHC class Ia and non-classical MHC class Ib molecules. Enables cytotoxic cells to monitor the expression of MHC class I molecules in healthy cells and to tolerate self. Primarily functions as a ligand binding subunit as it lacks the capacity to signal. Functionally, KLRD1-KLRC1 acts as an immune inhibitory receptor. Key inhibitory receptor on natural killer (NK) cells that regulates their activation and effector functions. Dominantly counteracts T cell receptor signaling on a subset of memory/effector CD8-positive T cells as part of an antigen-driven response to avoid autoimmunity. On intraepithelial CD8-positive gamma-delta regulatory T cells triggers TGFB1 secretion, which in turn limits the cytotoxic programming of intraepithelial CD8-positive alpha-beta T cells, distinguishing harmless from pathogenic antigens. In MHC-E-rich tumor microenvironment, acts as an immune inhibitory checkpoint and may contribute to progressive loss of effector functions of NK cells and tumor-specific T cells, a state known as cell exhaustion. Upon MHC-E-peptide binding, transmits intracellular signals through KLRC1 immunoreceptor tyrosine-based inhibition motifs (ITIMs) by recruiting INPP5D/SHIP-1 and INPPL1/SHIP-2 tyrosine phosphatases to ITIMs, and ultimately opposing signals transmitted by activating receptors through dephosphorylation of proximal signaling molecules. In terms of biological role, KLRD1-KLRC2 acts as an immune activating receptor. On cytotoxic lymphocyte subsets recognizes MHC-E loaded with signal sequence-derived peptides from non-classical MHC class Ib MHC-G molecules, likely playing a role in the generation and effector functions of adaptive NK cells and in maternal-fetal tolerance during pregnancy. Regulates the effector functions of terminally differentiated cytotoxic lymphocyte subsets, and in particular may play a role in adaptive NK cell response to viral infection. Upon MHC-E-peptide binding, transmits intracellular signals via the adapter protein TYROBP/DAP12, triggering the phosphorylation of proximal signaling molecules and cell activation. This Pongo pygmaeus (Bornean orangutan) protein is Natural killer cells antigen CD94 (KLRD1).